Here is a 144-residue protein sequence, read N- to C-terminus: uncharacterized protein (144 aa).

Transmembrane regions (helical) follow at residues 16 to 36 (FLIF…GAIF), 48 to 68 (GFIV…ALII), 87 to 107 (LLPE…LVLL), and 120 to 140 (VMSL…WYFG).

The protein resides in the cell membrane. This is an uncharacterized protein from Methanocaldococcus jannaschii (strain ATCC 43067 / DSM 2661 / JAL-1 / JCM 10045 / NBRC 100440) (Methanococcus jannaschii).